Reading from the N-terminus, the 179-residue chain is Large ribosomal subunit protein uL5 (179 aa).

This sequence belongs to the universal ribosomal protein uL5 family. In terms of assembly, part of the 50S ribosomal subunit; part of the 5S rRNA/L5/L18/L25 subcomplex. Contacts the 5S rRNA and the P site tRNA. Forms a bridge to the 30S subunit in the 70S ribosome.

Functionally, this is one of the proteins that bind and probably mediate the attachment of the 5S RNA into the large ribosomal subunit, where it forms part of the central protuberance. In the 70S ribosome it contacts protein S13 of the 30S subunit (bridge B1b), connecting the 2 subunits; this bridge is implicated in subunit movement. Contacts the P site tRNA; the 5S rRNA and some of its associated proteins might help stabilize positioning of ribosome-bound tRNAs. The sequence is that of Large ribosomal subunit protein uL5 from Prochlorococcus marinus (strain AS9601).